Here is a 316-residue protein sequence, read N- to C-terminus: tRNA dimethylallyltransferase (316 aa).

Position 15 to 22 (15 to 22) interacts with ATP; that stretch reads GPTASGKS. Residue 17–22 coordinates substrate; sequence TASGKS. The interaction with substrate tRNA stretch occupies residues 40 to 43; the sequence is DSRQ.

This sequence belongs to the IPP transferase family. Monomer. The cofactor is Mg(2+).

The enzyme catalyses adenosine(37) in tRNA + dimethylallyl diphosphate = N(6)-dimethylallyladenosine(37) in tRNA + diphosphate. Its function is as follows. Catalyzes the transfer of a dimethylallyl group onto the adenine at position 37 in tRNAs that read codons beginning with uridine, leading to the formation of N6-(dimethylallyl)adenosine (i(6)A). The chain is tRNA dimethylallyltransferase from Chlorobium limicola (strain DSM 245 / NBRC 103803 / 6330).